The following is a 350-amino-acid chain: Twinfilin-1 (350 aa).

Ser2 bears the N-acetylserine mark. One can recognise an ADF-H 1 domain in the interval 2–139 (SHQTGIQASE…SLHGYKKYLL (138 aa)). Residues Ser143 and Ser277 each carry the phosphoserine modification. One can recognise an ADF-H 2 domain in the interval 177–313 (GVAFPISQEA…TADFLYEEVH (137 aa)). Tyr309 is modified (phosphotyrosine). The tract at residues 316 to 350 (QHAHKQSFAKPKGPSGKRGIRRIIRGPAETEATTE) is disordered. Phosphothreonine is present on Thr349.

The protein belongs to the actin-binding proteins ADF family. Twinfilin subfamily. In terms of assembly, interacts with G-actin; ADP-actin form and capping protein (CP). May also be able to interact with TWF2 and phosphoinositides, PI(4,5)P2. When bound to PI(4,5)P2, it is down-regulated. Interacts with ACTG1. Post-translationally, phosphorylated on serine and threonine residues.

The protein resides in the cytoplasm. Its subcellular location is the cytoskeleton. In terms of biological role, actin-binding protein involved in motile and morphological processes. Inhibits actin polymerization, likely by sequestering G-actin. By capping the barbed ends of filaments, it also regulates motility. Seems to play an important role in clathrin-mediated endocytosis and distribution of endocytic organelles. This chain is Twinfilin-1 (TWF1), found in Bos taurus (Bovine).